The sequence spans 253 residues: 3-deoxy-manno-octulosonate cytidylyltransferase (253 aa).

Belongs to the KdsB family.

The protein resides in the cytoplasm. The enzyme catalyses 3-deoxy-alpha-D-manno-oct-2-ulosonate + CTP = CMP-3-deoxy-beta-D-manno-octulosonate + diphosphate. Its pathway is nucleotide-sugar biosynthesis; CMP-3-deoxy-D-manno-octulosonate biosynthesis; CMP-3-deoxy-D-manno-octulosonate from 3-deoxy-D-manno-octulosonate and CTP: step 1/1. It participates in bacterial outer membrane biogenesis; lipopolysaccharide biosynthesis. Functionally, activates KDO (a required 8-carbon sugar) for incorporation into bacterial lipopolysaccharide in Gram-negative bacteria. The sequence is that of 3-deoxy-manno-octulosonate cytidylyltransferase from Neisseria gonorrhoeae (strain ATCC 700825 / FA 1090).